Reading from the N-terminus, the 123-residue chain is Large ribosomal subunit protein uL29 (123 aa).

It belongs to the universal ribosomal protein uL29 family. Component of the large ribosomal subunit.

It localises to the cytoplasm. Component of the large ribosomal subunit. The ribosome is a large ribonucleoprotein complex responsible for the synthesis of proteins in the cell. In Hippocampus comes (Tiger tail seahorse), this protein is Large ribosomal subunit protein uL29 (rpl35).